The sequence spans 705 residues: Tyrosine decarboxylase (705 aa).

Over residues 22–32 the composition is skewed to polar residues; that stretch reads RIRNSLSPSRP. The interval 22 to 81 is disordered; that stretch reads RIRNSLSPSRPSMSEATATGSSSSSRASTTIPSTPNMDVTPTVEDPRQNDNNASGMTRDE. Over residues 33–55 the composition is skewed to low complexity; that stretch reads SMSEATATGSSSSSRASTTIPST. N6-(pyridoxal phosphate)lysine is present on Lys-380. Residues 554 to 620 adopt a coiled-coil conformation; it reads VKAVIAEEDE…AQKQHESLAK (67 aa). A compositionally biased stretch (polar residues) spans 667–678; that stretch reads HSQRPNRLSQSP. Residues 667–687 form a disordered region; the sequence is HSQRPNRLSQSPGSAGSAFFD.

Belongs to the group II decarboxylase family. Requires pyridoxal 5'-phosphate as cofactor. As to expression, expressed in the gonadal sheath projections in between the oocytes, in head RIM motor neurons and RIC interneurons.

It is found in the cytoplasm. It localises to the cell projection. The protein resides in the axon. Its subcellular location is the perikaryon. It carries out the reaction L-tyrosine + H(+) = tyramine + CO2. Functionally, required for the decarboxylation of tyrosine to tyramine, a precursor of octopamine but probably also itself a neurotransmitter. Involved in the regulation of egg laying, which is inhibited by tyramine. Also involved in controlling locomotion and head movements. Due to its involvement in octopamine biosynthesis, also required for crtc-1-dependent regulation of AMPK-mediated longevity which requires octopamine signaling. The polypeptide is Tyrosine decarboxylase (Caenorhabditis elegans).